The following is a 315-amino-acid chain: MTATSFLHQAKQQPHHTEPYIKALEAREYIIEQVPEELSKPKVAIICGSGLGTLASGLSAPVYEVPYEDIPHFHVSHVPGHASKLYFAFLGEKRVPTMILAGRYHSYEGYPIEATTFPVRLMKVMGVEVMVVTNAAGGLNQGFKVGDLMILKDHINFPGLAGMNPLRGPNAHEFGVRFPPLSDAYDLELRKLVYDAAKAHKVSRTIHEGCYAFVSGPCFETRAESRMLALMGADCVGMSTVPEVVVARHCGIRVLAISLVTNNVVVEESPSAKDLVEVDSNVMSKGAANHLEVLEVGIAAAADVRTMVETIVNFI.

Phosphate-binding positions include Ser-49, His-81, 103–105 (RYH), and Ala-135. Position 220 (Glu-220) interacts with a purine D-ribonucleoside. Ser-239 contributes to the phosphate binding site. Asn-262 is a binding site for a purine D-ribonucleoside.

It belongs to the PNP/MTAP phosphorylase family.

The protein resides in the cytoplasm. The protein localises to the nucleus. The enzyme catalyses a purine D-ribonucleoside + phosphate = a purine nucleobase + alpha-D-ribose 1-phosphate. Its pathway is purine metabolism; purine nucleoside salvage. Functionally, the purine nucleoside phosphorylases catalyze the phosphorolytic breakdown of the N-glycosidic bond in the beta-(deoxy)ribonucleoside molecules, with the formation of the corresponding free purine bases and pentose-1-phosphate. Cleaves guanosine and inosine. This is Putative purine nucleoside phosphorylase from Schizosaccharomyces pombe (strain 972 / ATCC 24843) (Fission yeast).